Here is a 377-residue protein sequence, read N- to C-terminus: MSDTTLELAKRIIACASVTPEDAGCMDILIERLKPLGFSIEFINRNGVTNLWARRGTTAPLFVFAGHTDVVPTGPLDKWTSPPFAPEIRDGVLYGRGTADMKSSVAASVTAVEAFVAANPQHPGSLAFLLTSDEEGDANDGTIAVVEALKARGETLDFCIIGEPTSVDTLGDMVKNGRRGSLSGVLTVKGIQCHIAYPEKGRNPIHEAAPALAELAATEWDQGNEYYQPTTWQISNIHGGTGATNVVPGSVDIKFNFRFSTASTPEGLQQRLSAILEKHKLDYEIKWTLGARPFLTGRGPLADAATTAIREICGIETELSTTGGTSDGRFIAEICRQMLEIGPVNATSHKIDECIAVDALPKLSAIYRRILEQLMTA.

H67 provides a ligand contact to Zn(2+). Residue D69 is part of the active site. D100 provides a ligand contact to Zn(2+). E134 serves as the catalytic Proton acceptor. Residues E135, E163, and H349 each contribute to the Zn(2+) site.

The protein belongs to the peptidase M20A family. DapE subfamily. Homodimer. Zn(2+) serves as cofactor. Co(2+) is required as a cofactor.

It carries out the reaction N-succinyl-(2S,6S)-2,6-diaminopimelate + H2O = (2S,6S)-2,6-diaminopimelate + succinate. It participates in amino-acid biosynthesis; L-lysine biosynthesis via DAP pathway; LL-2,6-diaminopimelate from (S)-tetrahydrodipicolinate (succinylase route): step 3/3. Its function is as follows. Catalyzes the hydrolysis of N-succinyl-L,L-diaminopimelic acid (SDAP), forming succinate and LL-2,6-diaminopimelate (DAP), an intermediate involved in the bacterial biosynthesis of lysine and meso-diaminopimelic acid, an essential component of bacterial cell walls. This Dechloromonas aromatica (strain RCB) protein is Succinyl-diaminopimelate desuccinylase.